Consider the following 75-residue polypeptide: Small ribosomal subunit protein bS18 (75 aa).

It belongs to the bacterial ribosomal protein bS18 family. In terms of assembly, part of the 30S ribosomal subunit. Forms a tight heterodimer with protein bS6.

In terms of biological role, binds as a heterodimer with protein bS6 to the central domain of the 16S rRNA, where it helps stabilize the platform of the 30S subunit. The polypeptide is Small ribosomal subunit protein bS18 (Buchnera aphidicola subsp. Schizaphis graminum (strain Sg)).